A 247-amino-acid polypeptide reads, in one-letter code: 5'-nucleotidase SurE (247 aa).

Positions 8, 9, 39, and 95 each coordinate a divalent metal cation.

Belongs to the SurE nucleotidase family. A divalent metal cation serves as cofactor.

The protein localises to the cytoplasm. The catalysed reaction is a ribonucleoside 5'-phosphate + H2O = a ribonucleoside + phosphate. Its function is as follows. Nucleotidase that shows phosphatase activity on nucleoside 5'-monophosphates. The sequence is that of 5'-nucleotidase SurE from Thermotoga petrophila (strain ATCC BAA-488 / DSM 13995 / JCM 10881 / RKU-1).